A 125-amino-acid polypeptide reads, in one-letter code: Large ribosomal subunit protein uL24 (125 aa).

The protein belongs to the universal ribosomal protein uL24 family. As to quaternary structure, part of the 50S ribosomal subunit.

One of two assembly initiator proteins, it binds directly to the 5'-end of the 23S rRNA, where it nucleates assembly of the 50S subunit. Its function is as follows. One of the proteins that surrounds the polypeptide exit tunnel on the outside of the subunit. This chain is Large ribosomal subunit protein uL24, found in Mycoplasma mobile (strain ATCC 43663 / 163K / NCTC 11711) (Mesomycoplasma mobile).